The sequence spans 151 residues: Putative pre-16S rRNA nuclease (151 aa).

It belongs to the YqgF nuclease family.

It is found in the cytoplasm. Its function is as follows. Could be a nuclease involved in processing of the 5'-end of pre-16S rRNA. This is Putative pre-16S rRNA nuclease from Neisseria meningitidis serogroup C (strain 053442).